Reading from the N-terminus, the 217-residue chain is MGQKINPIGLRVGIIRDWEAKWYAEKDFASLLHEDLKIRKFIDNELKEASVSHVEIERAANRINIAIHTGKPGMVIGKGGSEIEKLRNKLNALTDKKVHINVIEIKKVDLDARLVAENIARQLENRASFRRVQKQAITRAMKLGAKGIKTQVSGRLGGADIARAEQYSEGTVPLHTLRADIDYAHAEADTTYGKLGVKVWIYRGEVLPTKNTSGGGK.

Residues 38-106 enclose the KH type-2 domain; sequence IRKFIDNELK…KVHINVIEIK (69 aa).

Belongs to the universal ribosomal protein uS3 family. Part of the 30S ribosomal subunit. Forms a tight complex with proteins S10 and S14.

Its function is as follows. Binds the lower part of the 30S subunit head. Binds mRNA in the 70S ribosome, positioning it for translation. The chain is Small ribosomal subunit protein uS3 from Staphylococcus aureus (strain MSSA476).